We begin with the raw amino-acid sequence, 356 residues long: 45 kDa calcium-binding protein (356 aa).

Positions 1 to 29 (MMSRQAFLCSLGSLYLSLLFVFLLMDVYA) are cleaved as a signal peptide. The N-linked (GlcNAc...) asparagine glycan is linked to asparagine 33. 5 consecutive EF-hand domains span residues 92–127 (KNRKKLMVIFSKVDIDNDKKISAKEMQRWIMEKTDE), 131–166 (EAVEENKMHFRAVDPDGDGHVSWDEYKIKFLASKGL), 227–262 (MLKFMVKEIIRDLDQDGDKKLTLSEFISLPVGTVEN), 272–307 (WVKDRRKEFEDVIDANHDGIVTMEELEEYMDPMNEY), and 308–343 (NALNEAKQMIAVADENQNHHLELEEILKYSEYFTGS). Aspartate 105, aspartate 107, aspartate 109, lysine 111, glutamate 116, aspartate 144, aspartate 146, aspartate 148, histidine 150, glutamate 155, aspartate 240, aspartate 242, aspartate 244, lysine 246, glutamate 251, aspartate 285, asparagine 287, aspartate 289, glutamate 296, aspartate 321, asparagine 323, asparagine 325, histidine 327, and glutamate 332 together coordinate Ca(2+).

It belongs to the CREC family.

Its subcellular location is the golgi apparatus lumen. In terms of biological role, may regulate calcium-dependent activities in the endoplasmic reticulum lumen or post-ER compartment. This chain is 45 kDa calcium-binding protein (SDF4), found in Gallus gallus (Chicken).